The following is a 305-amino-acid chain: MENKYTHGVLFYHEHSGLKNINQGIGEVTTALSSICKHLSIQLSENEGDIIKYCQEIKTKNYAKDVDILFILGGDGTVNELINGVMTHDLQLPIGILPGGTFNDFTKTLNIAPNHKQASEQMISAQVGKYDVIKINNQYALNFVGLGLIVQNAENVQDGSKDIFGKLSYIGSTVKTLLNPTQFNYQLSIDDKTYSGETTMILTANGPFIGGSRIPLTDLSPQDGELNTFIFNEQSFSILNDIFKKRDSMNWNEITQGIEHIPGKKISLTTDPAMKVDIDGEISLETPIDIEVIPNAIQLLTVNDL.

One can recognise a DAGKc domain in the interval 3 to 139; the sequence is NKYTHGVLFY…YDVIKINNQY (137 aa). ATP-binding positions include S44, 74–80, and T101; that span reads GDGTVNE. Mg(2+) is bound by residues S220, D223, and E225. E281 (proton acceptor) is an active-site residue.

The protein belongs to the diacylglycerol/lipid kinase family. Requires Mg(2+) as cofactor.

In terms of biological role, may catalyze the ATP-dependent phosphorylation of lipids other than diacylglycerol (DAG). In Staphylococcus aureus (strain MSSA476), this protein is Putative lipid kinase SAS0691.